The primary structure comprises 277 residues: Release factor glutamine methyltransferase (277 aa).

Residues 117–121 (GTGTG), D140, W168, and N183 each bind S-adenosyl-L-methionine. Residue 183–186 (NPPY) coordinates substrate.

Belongs to the protein N5-glutamine methyltransferase family. PrmC subfamily.

It carries out the reaction L-glutaminyl-[peptide chain release factor] + S-adenosyl-L-methionine = N(5)-methyl-L-glutaminyl-[peptide chain release factor] + S-adenosyl-L-homocysteine + H(+). Methylates the class 1 translation termination release factors RF1/PrfA and RF2/PrfB on the glutamine residue of the universally conserved GGQ motif. The protein is Release factor glutamine methyltransferase of Shigella flexneri.